Consider the following 243-residue polypeptide: MKVEICVDNLESVITANQFPIDRIELCSALAVGGLTPNLGFIQQAQQISTIPLALMIRPRAGDFLYSEDEIQIMLNDIATAKQLGIQAVVFGALSANGEIDLATTELLVKASQGMEITFHRAFDLCKDPITALEQLIDLGCHRILTSGQAATAFDGIPVIQQLVKQANGRIQVMAGCGVNADNVKQIIEQTKVPEIHFSAKGQRQSLMDSISSARMGTSSQDNVLDIADSQKIKGILKYISLL.

The protein belongs to the CutC family.

The protein resides in the cytoplasm. This chain is PF03932 family protein CutC, found in Glaesserella parasuis serovar 5 (strain SH0165) (Haemophilus parasuis).